The sequence spans 205 residues: Guanylate kinase (205 aa).

A Guanylate kinase-like domain is found at 6–185 (GLLIVLSRPS…ACDRIKAIVV (180 aa)). Position 13–20 (13–20 (RPSGVGKG)) interacts with ATP.

Belongs to the guanylate kinase family.

The protein localises to the cytoplasm. The enzyme catalyses GMP + ATP = GDP + ADP. Essential for recycling GMP and indirectly, cGMP. This chain is Guanylate kinase, found in Bacillus cereus (strain ATCC 14579 / DSM 31 / CCUG 7414 / JCM 2152 / NBRC 15305 / NCIMB 9373 / NCTC 2599 / NRRL B-3711).